The chain runs to 781 residues: Serine/threonine-protein kinase PLK4 (781 aa).

The Protein kinase domain maps to 14–268 (YEVQHLLGKG…LEQVLRHPFM (255 aa)). Residues 20-28 (LGKGGFACV) and lysine 43 each bind ATP. Aspartate 139 functions as the Proton acceptor in the catalytic mechanism. The region spanning 397 to 514 (TEHISVPPLN…ARFVGLVKSK (118 aa)) is the Cryptic POLO box 1 (CPB1) domain. Residues 463–486 (QPDPGRGLPIQEQTSETHSSGTDN) form a disordered region. Polar residues predominate over residues 473-486 (QEQTSETHSSGTDN). The region spanning 515–618 (TPKVTYFSAL…GRRPVVEVLP (104 aa)) is the Cryptic POLO box 2 (CPB2) domain. The POLO box domain occupies 672-751 (PIKRLNVPGV…LPQVQMKLRC (80 aa)).

It belongs to the protein kinase superfamily. Ser/Thr protein kinase family. CDC5/Polo subfamily. As to quaternary structure, homodimer. In terms of processing, ubiquitinated by the SCF(Slimb) ubiquitin ligase complex; leading to its degradation by the proteasome during interphase and regulating centriole number and ensuring the block to centriole reduplication.

Its subcellular location is the cytoplasm. The protein localises to the cytoskeleton. The protein resides in the microtubule organizing center. It localises to the centrosome. It is found in the centriole. It carries out the reaction L-seryl-[protein] + ATP = O-phospho-L-seryl-[protein] + ADP + H(+). It catalyses the reaction L-threonyl-[protein] + ATP = O-phospho-L-threonyl-[protein] + ADP + H(+). In terms of biological role, serine/threonine-protein kinase that plays a central role in centriole duplication. Able to trigger procentriole formation on the surface of the mother centriole cylinder, using mother centriole as a platform, leading to the recruitment of centriole biogenesis proteins such as sas-6. When overexpressed, it is able to induce centrosome amplification through the simultaneous generation of multiple procentrioles adjoining each parental centriole during S phase. Centrosome amplification following overexpression can initiate tumorigenesis, highlighting the importance of centrosome regulation in cancers. This Drosophila virilis (Fruit fly) protein is Serine/threonine-protein kinase PLK4 (SAK).